A 163-amino-acid polypeptide reads, in one-letter code: 2-C-methyl-D-erythritol 2,4-cyclodiphosphate synthase (163 aa).

Residues aspartate 10 and histidine 12 each contribute to the a divalent metal cation site. Residues 10-12 (DVH) and 36-37 (HS) each bind 4-CDP-2-C-methyl-D-erythritol 2-phosphate. A divalent metal cation is bound at residue histidine 44. 4-CDP-2-C-methyl-D-erythritol 2-phosphate-binding positions include 58-60 (DIG), 63-67 (FPDND), 134-137 (TTTE), phenylalanine 141, and arginine 144.

Belongs to the IspF family. Homotrimer. A divalent metal cation serves as cofactor.

It carries out the reaction 4-CDP-2-C-methyl-D-erythritol 2-phosphate = 2-C-methyl-D-erythritol 2,4-cyclic diphosphate + CMP. It functions in the pathway isoprenoid biosynthesis; isopentenyl diphosphate biosynthesis via DXP pathway; isopentenyl diphosphate from 1-deoxy-D-xylulose 5-phosphate: step 4/6. In terms of biological role, involved in the biosynthesis of isopentenyl diphosphate (IPP) and dimethylallyl diphosphate (DMAPP), two major building blocks of isoprenoid compounds. Catalyzes the conversion of 4-diphosphocytidyl-2-C-methyl-D-erythritol 2-phosphate (CDP-ME2P) to 2-C-methyl-D-erythritol 2,4-cyclodiphosphate (ME-CPP) with a corresponding release of cytidine 5-monophosphate (CMP). This chain is 2-C-methyl-D-erythritol 2,4-cyclodiphosphate synthase, found in Carboxydothermus hydrogenoformans (strain ATCC BAA-161 / DSM 6008 / Z-2901).